The following is a 461-amino-acid chain: D-phenylhydantoinase (461 aa).

Residues His59, His61, and Lys151 each contribute to the a divalent metal cation site. Lys151 carries the N6-carboxylysine modification. Tyr156 serves as a coordination point for substrate. The a divalent metal cation site is built by His182 and His239. A substrate-binding site is contributed by Ser286. Asp313 is a binding site for a divalent metal cation. Asn335 lines the substrate pocket.

This sequence belongs to the metallo-dependent hydrolases superfamily. Hydantoinase/dihydropyrimidinase family. In terms of assembly, homotetramer. It depends on a divalent metal cation as a cofactor. Post-translationally, carboxylation allows a single lysine to coordinate two divalent metal cations.

The catalysed reaction is D-5-phenylhydantoin + H2O = N-carbamoyl-D-phenylglycine + H(+). In terms of biological role, catalyzes the stereospecific hydrolysis of the cyclic amide bond of D-hydantoin derivatives with an aromatic side chains at the 5'-position. Has no activity on dihydropyrimidines. The physiological function is unknown. The chain is D-phenylhydantoinase from Escherichia coli O127:H6 (strain E2348/69 / EPEC).